The primary structure comprises 684 residues: Phenoloxidase 1 (684 aa).

Positions 1-50 (MSDKNKLLLLFDRPLETVIVPRGPDQEAFDVPVDLLSDRYKAIGVQVSNR) are cleaved as a propeptide — removed by PPAF1. Asn80 is a glycosylation site (N-linked (GlcNAc...) asparagine). 3 residues coordinate Cu cation: His208, His212, and His237. Glu349 (proton acceptor) is an active-site residue. Residues Asn352 and Asn356 are each glycosylated (N-linked (GlcNAc...) asparagine). Residues His364, His368, and His404 each coordinate Cu cation. N-linked (GlcNAc...) asparagine glycosylation is found at Asn486, Asn491, and Asn545. Cystine bridges form between Cys579–Cys621 and Cys581–Cys628.

Belongs to the tyrosinase family. Dimer. Might form a homodimer or a heterodimer with PPO1. Might interact with PPAF2 (via CLIP domain); the interaction might be required for PPO1 activity. Cu(2+) is required as a cofactor. In terms of processing, propeptide cleaved by PPAF1. As to expression, hemocytes.

The protein resides in the secreted. This is a copper-containing oxidase that functions in the formation of pigments such as melanins and other polyphenolic compounds. Catalyzes the oxidation of o-diphenols (N-acetyldopamine, 4-methylcatechol and dopamine). Cannot oxidize monophenols and p-phenols (L-tyrosine, tyramine, gentisic acid and hydroquinone). Binds to the surface of hemocytes and is involved in hemocyte melanization. Activation of the enzyme in response to bacterial lipopolysaccharides (LPS) suggests it may play a role in innate immunity. This chain is Phenoloxidase 1, found in Holotrichia diomphalia (Korean black chafer).